An 842-amino-acid chain; its full sequence is Alanine--tRNA ligase (842 aa).

Zn(2+) contacts are provided by His549, His553, Cys650, and His654.

Belongs to the class-II aminoacyl-tRNA synthetase family. It depends on Zn(2+) as a cofactor.

The protein resides in the cytoplasm. The catalysed reaction is tRNA(Ala) + L-alanine + ATP = L-alanyl-tRNA(Ala) + AMP + diphosphate. Its function is as follows. Catalyzes the attachment of alanine to tRNA(Ala) in a two-step reaction: alanine is first activated by ATP to form Ala-AMP and then transferred to the acceptor end of tRNA(Ala). Also edits incorrectly charged Ser-tRNA(Ala) and Gly-tRNA(Ala) via its editing domain. In Campylobacter jejuni subsp. jejuni serotype O:23/36 (strain 81-176), this protein is Alanine--tRNA ligase.